The chain runs to 231 residues: 2-C-methyl-D-erythritol 4-phosphate cytidylyltransferase (231 aa).

Belongs to the IspD/TarI cytidylyltransferase family. IspD subfamily.

It carries out the reaction 2-C-methyl-D-erythritol 4-phosphate + CTP + H(+) = 4-CDP-2-C-methyl-D-erythritol + diphosphate. It participates in isoprenoid biosynthesis; isopentenyl diphosphate biosynthesis via DXP pathway; isopentenyl diphosphate from 1-deoxy-D-xylulose 5-phosphate: step 2/6. Functionally, catalyzes the formation of 4-diphosphocytidyl-2-C-methyl-D-erythritol from CTP and 2-C-methyl-D-erythritol 4-phosphate (MEP). The polypeptide is 2-C-methyl-D-erythritol 4-phosphate cytidylyltransferase (Lysinibacillus sphaericus (strain C3-41)).